Here is a 142-residue protein sequence, read N- to C-terminus: Large ribosomal subunit protein uL13 (142 aa).

Belongs to the universal ribosomal protein uL13 family. In terms of assembly, part of the 50S ribosomal subunit.

In terms of biological role, this protein is one of the early assembly proteins of the 50S ribosomal subunit, although it is not seen to bind rRNA by itself. It is important during the early stages of 50S assembly. The sequence is that of Large ribosomal subunit protein uL13 from Vibrio parahaemolyticus serotype O3:K6 (strain RIMD 2210633).